The following is a 442-amino-acid chain: Trigger factor (442 aa).

The PPIase FKBP-type domain occupies 165 to 250 (DDTAQIDFEG…LHKILQKELP (86 aa)).

Belongs to the FKBP-type PPIase family. Tig subfamily.

The protein resides in the cytoplasm. It catalyses the reaction [protein]-peptidylproline (omega=180) = [protein]-peptidylproline (omega=0). Involved in protein export. Acts as a chaperone by maintaining the newly synthesized protein in an open conformation. Functions as a peptidyl-prolyl cis-trans isomerase. The sequence is that of Trigger factor from Helicobacter hepaticus (strain ATCC 51449 / 3B1).